The chain runs to 317 residues: 4-hydroxy-3-methylbut-2-enyl diphosphate reductase (317 aa).

Cys12 is a binding site for [4Fe-4S] cluster. Positions 41 and 74 each coordinate (2E)-4-hydroxy-3-methylbut-2-enyl diphosphate. The dimethylallyl diphosphate site is built by His41 and His74. Residues His41 and His74 each coordinate isopentenyl diphosphate. Residue Cys97 participates in [4Fe-4S] cluster binding. His125 is a (2E)-4-hydroxy-3-methylbut-2-enyl diphosphate binding site. Position 125 (His125) interacts with dimethylallyl diphosphate. His125 lines the isopentenyl diphosphate pocket. Glu127 (proton donor) is an active-site residue. Thr168 contributes to the (2E)-4-hydroxy-3-methylbut-2-enyl diphosphate binding site. Cys198 is a [4Fe-4S] cluster binding site. Ser226, Ser227, Asn228, and Ser270 together coordinate (2E)-4-hydroxy-3-methylbut-2-enyl diphosphate. Positions 226, 227, 228, and 270 each coordinate dimethylallyl diphosphate. Ser226, Ser227, Asn228, and Ser270 together coordinate isopentenyl diphosphate.

Belongs to the IspH family. As to quaternary structure, homodimer. [4Fe-4S] cluster is required as a cofactor.

The catalysed reaction is isopentenyl diphosphate + 2 oxidized [2Fe-2S]-[ferredoxin] + H2O = (2E)-4-hydroxy-3-methylbut-2-enyl diphosphate + 2 reduced [2Fe-2S]-[ferredoxin] + 2 H(+). It carries out the reaction dimethylallyl diphosphate + 2 oxidized [2Fe-2S]-[ferredoxin] + H2O = (2E)-4-hydroxy-3-methylbut-2-enyl diphosphate + 2 reduced [2Fe-2S]-[ferredoxin] + 2 H(+). It participates in isoprenoid biosynthesis; dimethylallyl diphosphate biosynthesis; dimethylallyl diphosphate from (2E)-4-hydroxy-3-methylbutenyl diphosphate: step 1/1. It functions in the pathway isoprenoid biosynthesis; isopentenyl diphosphate biosynthesis via DXP pathway; isopentenyl diphosphate from 1-deoxy-D-xylulose 5-phosphate: step 6/6. In terms of biological role, catalyzes the conversion of 1-hydroxy-2-methyl-2-(E)-butenyl 4-diphosphate (HMBPP) into a mixture of isopentenyl diphosphate (IPP) and dimethylallyl diphosphate (DMAPP). Acts in the terminal step of the DOXP/MEP pathway for isoprenoid precursor biosynthesis. The protein is 4-hydroxy-3-methylbut-2-enyl diphosphate reductase of Yersinia pestis bv. Antiqua (strain Antiqua).